Here is a 211-residue protein sequence, read N- to C-terminus: Large ribosomal subunit protein uL3 (211 aa).

Belongs to the universal ribosomal protein uL3 family. Part of the 50S ribosomal subunit. Forms a cluster with proteins L14 and L19.

Its function is as follows. One of the primary rRNA binding proteins, it binds directly near the 3'-end of the 23S rRNA, where it nucleates assembly of the 50S subunit. The sequence is that of Large ribosomal subunit protein uL3 from Halothermothrix orenii (strain H 168 / OCM 544 / DSM 9562).